A 337-amino-acid chain; its full sequence is Glucokinase (337 aa).

Residue 11–16 participates in ATP binding; the sequence is ADIGGT.

Belongs to the bacterial glucokinase family.

The protein localises to the cytoplasm. The catalysed reaction is D-glucose + ATP = D-glucose 6-phosphate + ADP + H(+). This is Glucokinase from Xylella fastidiosa (strain M12).